The sequence spans 188 residues: Large ribosomal subunit protein bL9 (188 aa).

Over residues 149 to 170 (RSEEEAERQARGEEIGVEKEEP) the composition is skewed to basic and acidic residues. Positions 149–188 (RSEEEAERQARGEEIGVEKEEPSGFVEEALEETVEAPAEA) are disordered.

Belongs to the bacterial ribosomal protein bL9 family.

Functionally, binds to the 23S rRNA. This is Large ribosomal subunit protein bL9 from Gluconacetobacter diazotrophicus (strain ATCC 49037 / DSM 5601 / CCUG 37298 / CIP 103539 / LMG 7603 / PAl5).